The sequence spans 161 residues: Troponin C, slow skeletal and cardiac muscles (161 aa).

An N-acetylmethionine modification is found at methionine 1. EF-hand domains lie at 16-51, 52-87, 92-127, and 128-161; these read QKNE…LGQN, PTPE…CMKD, KSEE…TGET, and ITED…KGVE. Ca(2+) is bound by residues aspartate 65, aspartate 67, serine 69, threonine 71, and glutamate 76. A Phosphoserine modification is found at serine 98. Ca(2+)-binding residues include aspartate 105, asparagine 107, aspartate 109, tyrosine 111, glutamate 116, aspartate 141, asparagine 143, aspartate 145, arginine 147, and glutamate 152.

This sequence belongs to the troponin C family.

Functionally, troponin is the central regulatory protein of striated muscle contraction. Tn consists of three components: Tn-I which is the inhibitor of actomyosin ATPase, Tn-T which contains the binding site for tropomyosin and Tn-C. The binding of calcium to Tn-C abolishes the inhibitory action of Tn on actin filaments. This chain is Troponin C, slow skeletal and cardiac muscles (Tnnc1), found in Mus musculus (Mouse).